Reading from the N-terminus, the 94-residue chain is Small ribosomal subunit protein uS19 (94 aa).

Belongs to the universal ribosomal protein uS19 family.

Functionally, protein S19 forms a complex with S13 that binds strongly to the 16S ribosomal RNA. This is Small ribosomal subunit protein uS19 from Desulforudis audaxviator (strain MP104C).